A 613-amino-acid chain; its full sequence is Dihydroxy-acid dehydratase (613 aa).

Asp-81 provides a ligand contact to Mg(2+). Residue Cys-122 coordinates [2Fe-2S] cluster. Residues Asp-123 and Lys-124 each coordinate Mg(2+). N6-carboxylysine is present on Lys-124. Cys-195 contributes to the [2Fe-2S] cluster binding site. Glu-491 contributes to the Mg(2+) binding site. Catalysis depends on Ser-517, which acts as the Proton acceptor.

The protein belongs to the IlvD/Edd family. Homodimer. [2Fe-2S] cluster serves as cofactor. The cofactor is Mg(2+).

It carries out the reaction (2R)-2,3-dihydroxy-3-methylbutanoate = 3-methyl-2-oxobutanoate + H2O. The catalysed reaction is (2R,3R)-2,3-dihydroxy-3-methylpentanoate = (S)-3-methyl-2-oxopentanoate + H2O. The protein operates within amino-acid biosynthesis; L-isoleucine biosynthesis; L-isoleucine from 2-oxobutanoate: step 3/4. Its pathway is amino-acid biosynthesis; L-valine biosynthesis; L-valine from pyruvate: step 3/4. In terms of biological role, functions in the biosynthesis of branched-chain amino acids. Catalyzes the dehydration of (2R,3R)-2,3-dihydroxy-3-methylpentanoate (2,3-dihydroxy-3-methylvalerate) into 2-oxo-3-methylpentanoate (2-oxo-3-methylvalerate) and of (2R)-2,3-dihydroxy-3-methylbutanoate (2,3-dihydroxyisovalerate) into 2-oxo-3-methylbutanoate (2-oxoisovalerate), the penultimate precursor to L-isoleucine and L-valine, respectively. The sequence is that of Dihydroxy-acid dehydratase from Vibrio atlanticus (strain LGP32) (Vibrio splendidus (strain Mel32)).